A 200-amino-acid polypeptide reads, in one-letter code: MGDPKFHHKKYSTPRHPWEKDRIDEENKILVKYGLKNKREIWRSEAMLSSIRSQARYLRARLRASDANAQKQLERMIKRLSRYKILSDKATLDDVLSLTVENILDRRLQTIVFKKNLALSEKQARQLITHGHITVNGRRVTVPGMLVEAQYEDTIAYYENSPIANELHPIRQALLSPAERVKEEAEKEAAASEDGGEQDE.

Residues 106-170 form the S4 RNA-binding domain; that stretch reads RRLQTIVFKK…SPIANELHPI (65 aa). The disordered stretch occupies residues 178-200; sequence AERVKEEAEKEAAASEDGGEQDE. Positions 179-190 are enriched in basic and acidic residues; it reads ERVKEEAEKEAA.

The protein belongs to the universal ribosomal protein uS4 family. As to quaternary structure, part of the 30S ribosomal subunit. Contacts protein S5. The interaction surface between S4 and S5 is involved in control of translational fidelity.

One of the primary rRNA binding proteins, it binds directly to 16S rRNA where it nucleates assembly of the body of the 30S subunit. Its function is as follows. With S5 and S12 plays an important role in translational accuracy. The polypeptide is Small ribosomal subunit protein uS4 (Thermoplasma volcanium (strain ATCC 51530 / DSM 4299 / JCM 9571 / NBRC 15438 / GSS1)).